Consider the following 76-residue polypeptide: uncharacterized protein (76 aa).

This is an uncharacterized protein from Escherichia coli (strain K12).